Consider the following 181-residue polypeptide: Probable inosine/xanthosine triphosphatase (181 aa).

D65 provides a ligand contact to Mg(2+).

Belongs to the YjjX NTPase family. As to quaternary structure, homodimer. It depends on Mg(2+) as a cofactor. Mn(2+) is required as a cofactor.

It catalyses the reaction XTP + H2O = XDP + phosphate + H(+). It carries out the reaction ITP + H2O = IDP + phosphate + H(+). Phosphatase that hydrolyzes non-canonical purine nucleotides such as XTP and ITP to their respective diphosphate derivatives. Probably excludes non-canonical purines from DNA/RNA precursor pool, thus preventing their incorporation into DNA/RNA and avoiding chromosomal lesions. This is Probable inosine/xanthosine triphosphatase from Caldivirga maquilingensis (strain ATCC 700844 / DSM 13496 / JCM 10307 / IC-167).